The following is a 477-amino-acid chain: Oxidative stress-induced growth inhibitor 1 (477 aa).

S12 is modified (phosphoserine).

It belongs to the OKL38 family. The cofactor is NADPH. Ubiquitous. Highest expression in the ovary, testis, kidney, skeletal muscle and liver.

The protein resides in the midbody. Monooxygenase catalytic activity. Involved in regulation of cytokinesis; promotes RHOA activity, probably acting locally at the midbody in late cytokinesis. Monooxygenase activity is involved in stabilizing transient structures between daughter cells, termed intercellular bridges, before abscission. Regulates differentiation and proliferation through the regulation of cell death. The chain is Oxidative stress-induced growth inhibitor 1 from Homo sapiens (Human).